The chain runs to 341 residues: D-aspartate oxidase (341 aa).

FAD contacts are provided by D36, K37, T43, S44, M50, G307, I311, and S312. Positions 339–341 (SNL) match the Microbody targeting signal motif.

Belongs to the DAMOX/DASOX family. Monomer. Interacts with PEX5; the interaction is direct and required for localization of DDO to the peroxisome. Interacts with DAOA; the interaction is direct and increases the degradation rate of DDO. FAD is required as a cofactor. In terms of processing, may be S-nitrosylated. As to expression, expressed in epithelial cells of the proximal nephron tubules in the renal cortex (at protein level). In the brain, expressed in the frontal, temporal, and occipital lobes of the cortex, hippocampus, striatum, diencephalon, brainstem, cerebellum, spinal cord, plexus choroiderus and ependyma (at protein level). Expression is increased in the prefrontal cortex of schizophrenic patients. Levels are normal in the superior frontal gyrus of patients with Alzheimer's disease.

It localises to the peroxisome matrix. The protein localises to the cytoplasm. Its subcellular location is the cytosol. It carries out the reaction D-aspartate + O2 + H2O = oxaloacetate + H2O2 + NH4(+). The catalysed reaction is D-glutamate + O2 + H2O = H2O2 + 2-oxoglutarate + NH4(+). Its activity is regulated as follows. Inhibited by the benzodiazepine olanzapine. Inhibited by aminooxyacetic acid, thiolactomycin, malonate and meso-tartrate. Clozapine, haloperidol and chlorpromazine have no effect on activity. Not inhibited by sodium, potassium, magnesium, iron, calcium, cobalt, copper, nickel, manganese or zinc ions. Not inhibited by AMP, ADP, ATP, or cAMP. Not inhibited by pyridoxal 5'-phosphate. In terms of biological role, selectively catalyzes the oxidative deamination of acidic amino acids. Suppresses the level of D-aspartate in the brain, an amino acid that can act as an agonist for glutamate receptors. Protects the organism from the toxicity of D-amino acids. May also function in the intestine. The protein is D-aspartate oxidase (DDO) of Homo sapiens (Human).